Here is a 375-residue protein sequence, read N- to C-terminus: Mitochondrial phosphate carrier protein 3, mitochondrial (375 aa).

Residues 76-96 (AFYAACTFGGILSCGLTHMTV) form a helical membrane-spanning segment. 3 Solcar repeats span residues 76–160 (AFYA…FKKT), 173–257 (YKTL…IVEM), and 274–353 (LQLG…FKVF). The Mitochondrial matrix segment spans residues 97–134 (TPLDLVKCNMQIDPAKYKSISSGFGILLKEQGVKGFFR). The helical transmembrane segment at 135 to 154 (GWVPTLLGYSAQGACKFGFY) threads the bilayer. Over 155–175 (EYFKKTYSDLAGPEYTAKYKT) the chain is Mitochondrial intermembrane. Residues 176 to 196 (LIYLAGSASAEIIADIALCPF) form a helical membrane-spanning segment. Residues 197-231 (EAVKVRVQTQPGFARGMSDGFPKFIKSEGYGGLYK) lie on the Mitochondrial matrix side of the membrane. Residues 232–251 (GLAPLWGRQIPYTMMKFASF) form a helical membrane-spanning segment. Residues 252 to 272 (ETIVEMIYKYAIPNPKSECSK) are Mitochondrial intermembrane-facing. The chain crosses the membrane as a helical span at residues 273–293 (GLQLGVSFAGGYVAGVFCAIV). Over 294 to 332 (SHPADNLVSFLNNAKGATVGDAVKKIGMVGLFTRGLPLR) the chain is Mitochondrial matrix. The helical transmembrane segment at 333-353 (IVMIGTLTGAQWGLYDAFKVF) threads the bilayer. The Mitochondrial intermembrane portion of the chain corresponds to 354–375 (VGLPTTGGVAPAPAIAATEAKA).

Belongs to the mitochondrial carrier (TC 2.A.29) family. Expressed in stems, leaves and flowers. Strong expression in vascular tissues.

It localises to the mitochondrion inner membrane. Transport of phosphate groups from the cytosol to the mitochondrial matrix. Mediates salt stress tolerance through an ATP-dependent pathway and via modulation of the gibberellin metabolism. The chain is Mitochondrial phosphate carrier protein 3, mitochondrial (MPT3) from Arabidopsis thaliana (Mouse-ear cress).